The following is a 439-amino-acid chain: Thymidine phosphorylase (439 aa).

Belongs to the thymidine/pyrimidine-nucleoside phosphorylase family. As to quaternary structure, homodimer.

The catalysed reaction is thymidine + phosphate = 2-deoxy-alpha-D-ribose 1-phosphate + thymine. It functions in the pathway pyrimidine metabolism; dTMP biosynthesis via salvage pathway; dTMP from thymine: step 1/2. Its function is as follows. The enzymes which catalyze the reversible phosphorolysis of pyrimidine nucleosides are involved in the degradation of these compounds and in their utilization as carbon and energy sources, or in the rescue of pyrimidine bases for nucleotide synthesis. This Mesorhizobium japonicum (strain LMG 29417 / CECT 9101 / MAFF 303099) (Mesorhizobium loti (strain MAFF 303099)) protein is Thymidine phosphorylase.